Here is a 448-residue protein sequence, read N- to C-terminus: Divalent metal cation transporter MntH (448 aa).

11 helical membrane-spanning segments follow: residues 41 to 61, 69 to 89, 117 to 137, 147 to 167, 176 to 196, 215 to 235, 270 to 290, 307 to 327, 363 to 383, 384 to 404, and 424 to 444; these read LFAF…PGNW, SEFG…AVLL, GFVL…AEVI, FGIP…LVLF, IEVI…AEMV, IVTN…TVMP, FSLT…AAAF, LLNP…ALLA, VLAI…GINE, LLIF…IPLV, and IVSW…LFYT.

The protein belongs to the NRAMP family.

It localises to the cell membrane. Its function is as follows. H(+)-stimulated, divalent metal cation uptake system. This chain is Divalent metal cation transporter MntH, found in Listeria innocua serovar 6a (strain ATCC BAA-680 / CLIP 11262).